Consider the following 1029-residue polypeptide: Sodium/potassium-transporting ATPase subunit alpha-4 (1029 aa).

The interval 1–37 (MGLWGKKGTVAPHDQSPRRRPKKGLIKKKMVKREKQK) is disordered. Residues 1–95 (MGLWGKKGTV…NTVTPPPTTP (95 aa)) are Cytoplasmic-facing. Residues 18–36 (RRRPKKGLIKKKMVKREKQ) show a composition bias toward basic residues. The tract at residues 90–92 (PPP) is interaction with phosphoinositide-3 kinase. Residues 96 to 116 (EWVKFCKQLFGGFSLLLWTGA) form a helical membrane-spanning segment. Topologically, residues 117–139 (ILCFVAYSIQIYFNEEPTKDNLY) are extracellular. Residues 140 to 160 (LSIVLSVVVIVTGCFSYYQEA) traverse the membrane as a helical segment. Over 161 to 296 (KSSKIMESFK…VGQTPIAAEI (136 aa)) the chain is Cytoplasmic. Positions 223–237 (NSSLTGESEPQSRSP) are enriched in polar residues. The tract at residues 223 to 242 (NSSLTGESEPQSRSPDFTHE) is disordered. Residues 297-316 (EHFIHLITVVAVFLGVTFFA) form a helical membrane-spanning segment. The Extracellular portion of the chain corresponds to 317–328 (LSLLLGYGWLEA). A helical transmembrane segment spans residues 329–346 (IIFLIGIIVANVPEGLLA). The Cytoplasmic portion of the chain corresponds to 347-778 (TVTVCLTLTA…EEGRLIFDNL (432 aa)). D384 acts as the 4-aspartylphosphate intermediate in catalysis. D723 and D727 together coordinate Mg(2+). The chain crosses the membrane as a helical span at residues 779-798 (KKSIMYTLTSNIPEITPFLM). Topologically, residues 799-808 (FIILGIPLPL) are extracellular. Residues 809–829 (GTITILCIDLGTDMVPAISLA) form a helical membrane-spanning segment. The Cytoplasmic segment spans residues 830 to 849 (YESAESDIMKRLPRNPKTDN). A helical transmembrane segment spans residues 850–872 (LVNHRLIGMAYGQIGMIQALAGF). Residues 873–924 (FTYFVILAENGFRPVDLLGIRLHWEDKYLNDLEDSYGQQWTYEQRKVVEFTC) lie on the Extracellular side of the membrane. A helical transmembrane segment spans residues 925–944 (QTAFFVTIVVVQWADLIISK). At 945–957 (TRRNSLFQQGMRN) the chain is on the cytoplasmic side. S949 is subject to Phosphoserine; by PKA. The chain crosses the membrane as a helical span at residues 958 to 976 (KVLIFGILEETLLAAFLSY). The Extracellular portion of the chain corresponds to 977 to 991 (TPGMDVALRMYPLKI). The chain crosses the membrane as a helical span at residues 992 to 1012 (TWWLCAIPYSILIFVYDEIRK). Residues 1013–1029 (LLIRQHPDGWVERETYY) are Cytoplasmic-facing.

The protein belongs to the cation transport ATPase (P-type) (TC 3.A.3) family. Type IIC subfamily. In terms of assembly, the sodium/potassium-transporting ATPase is composed of a catalytic alpha subunit, an auxiliary non-catalytic beta subunit and an additional regulatory subunit. Specifically expressed in testis. Found in very low levels in skeletal muscle. Expressed in mature sperm (at protein level).

It localises to the cell membrane. The catalysed reaction is K(+)(out) + Na(+)(in) + ATP + H2O = K(+)(in) + Na(+)(out) + ADP + phosphate + H(+). Its activity is regulated as follows. Specifically inhibited by an endogenous cardiac glycoside, ouabain. In terms of biological role, this is the catalytic component of the active enzyme, which catalyzes the hydrolysis of ATP coupled with the exchange of sodium and potassium ions across the plasma membrane. This action creates the electrochemical gradient of sodium and potassium ions, providing the energy for active transport of various nutrients. Plays a role in sperm motility. This chain is Sodium/potassium-transporting ATPase subunit alpha-4, found in Homo sapiens (Human).